Here is a 192-residue protein sequence, read N- to C-terminus: Orotate phosphoribosyltransferase (192 aa).

116–124 is a binding site for 5-phospho-alpha-D-ribose 1-diphosphate; the sequence is EDIVTTGLS. Residues threonine 120 and arginine 148 each coordinate orotate.

It belongs to the purine/pyrimidine phosphoribosyltransferase family. PyrE subfamily. In terms of assembly, homodimer. The cofactor is Mg(2+).

The enzyme catalyses orotidine 5'-phosphate + diphosphate = orotate + 5-phospho-alpha-D-ribose 1-diphosphate. Its pathway is pyrimidine metabolism; UMP biosynthesis via de novo pathway; UMP from orotate: step 1/2. Catalyzes the transfer of a ribosyl phosphate group from 5-phosphoribose 1-diphosphate to orotate, leading to the formation of orotidine monophosphate (OMP). This Brucella canis (strain ATCC 23365 / NCTC 10854 / RM-666) protein is Orotate phosphoribosyltransferase.